Here is a 629-residue protein sequence, read N- to C-terminus: Probable alpha-L-arabinofuranosidase A (629 aa).

The first 25 residues, 1 to 25 (MVALSTLSGLSALPFLFSLVQNVYG), serve as a signal peptide directing secretion. N36, N51, N140, N152, N168, N171, N260, N494, and N534 each carry an N-linked (GlcNAc...) asparagine glycan.

This sequence belongs to the glycosyl hydrolase 51 family.

It is found in the secreted. The catalysed reaction is Hydrolysis of terminal non-reducing alpha-L-arabinofuranoside residues in alpha-L-arabinosides.. Its pathway is glycan metabolism; L-arabinan degradation. In terms of biological role, alpha-L-arabinofuranosidase involved in the degradation of arabinoxylan, a major component of plant hemicellulose. Acts only on small linear 1,5-alpha-linked L-arabinofuranosyl oligosaccharides. In Aspergillus oryzae (strain ATCC 42149 / RIB 40) (Yellow koji mold), this protein is Probable alpha-L-arabinofuranosidase A (abfA).